The primary structure comprises 469 residues: Protopanaxadiol 6-hydroxylase (469 aa).

The helical transmembrane segment at 3–23 (LFISSQLLLLLVFCLFLFWNF) threads the bilayer. Residue Cys416 coordinates heme.

Belongs to the cytochrome P450 family. Requires heme as cofactor. Accumulates ubiquitously in all organs of plants, including roots, stems and leaves.

The protein localises to the membrane. It carries out the reaction (20S)-protopanaxadiol + reduced [NADPH--hemoprotein reductase] + O2 = (20S)-protopanaxatriol + oxidized [NADPH--hemoprotein reductase] + H2O + H(+). It functions in the pathway secondary metabolite biosynthesis; terpenoid biosynthesis. Its activity is regulated as follows. Activated by N,N'-dicyclohexylcarbodiimide (DCCD) thus leading to increased ginsenosides accumulation. Its function is as follows. Component of the dammarane-type triterpene saponins (e.g. PPT-type ginsenosides or panaxosides) biosynthetic pathway. Catalyzes the formation of protopanaxatriol from protopanaxadiol during ginsenoside biosynthesis, a class of tetracyclic triterpenoid saponins. In Panax ginseng (Korean ginseng), this protein is Protopanaxadiol 6-hydroxylase.